We begin with the raw amino-acid sequence, 243 residues long: UPF0246 protein MGAS9429_Spy1799 (243 aa).

It belongs to the UPF0246 family.

The polypeptide is UPF0246 protein MGAS9429_Spy1799 (Streptococcus pyogenes serotype M12 (strain MGAS9429)).